Consider the following 1116-residue polypeptide: Electrogenic sodium bicarbonate cotransporter 4 (1116 aa).

The span at M1–D14 shows a compositional bias: basic and acidic residues. Disordered stretches follow at residues M1 to P92, P222 to D257, and P431 to E467. Over M1 to S515 the chain is Cytoplasmic. Low complexity predominate over residues S233–A247. Gly residues predominate over residues S437–S464. The helical transmembrane segment at A516–G536 threads the bilayer. At D537–L558 the chain is on the extracellular side. The helical transmembrane segment at F559 to F579 threads the bilayer. Residues E580 to W600 lie on the Cytoplasmic side of the membrane. A helical membrane pass occupies residues I601 to I621. The Extracellular segment spans residues K622–G631. Residues F632–F652 traverse the membrane as a helical segment. Topologically, residues K653–Q730 are cytoplasmic. Residues F731–L751 form a helical membrane-spanning segment. The Extracellular portion of the chain corresponds to T752–T768. A helical transmembrane segment spans residues L769 to F789. The Cytoplasmic segment spans residues G790–N819. A helical transmembrane segment spans residues P820–M840. Over D841–D865 the chain is Extracellular. A helical transmembrane segment spans residues L866 to A886. The Cytoplasmic portion of the chain corresponds to A887–T922. Residues G923–I943 form a helical membrane-spanning segment. The Extracellular segment spans residues P944–M945. A helical transmembrane segment spans residues P946–W966. Residues E967–H987 are Cytoplasmic-facing. The next 2 membrane-spanning stretches (helical) occupy residues V988 to W1008 and I1009 to V1029. The Cytoplasmic portion of the chain corresponds to R1030–L1116.

Belongs to the anion exchanger (TC 2.A.31) family.

The protein localises to the apical cell membrane. Its subcellular location is the basolateral cell membrane. It catalyses the reaction 2 hydrogencarbonate(out) + Na(+)(out) = 2 hydrogencarbonate(in) + Na(+)(in). The catalysed reaction is 3 hydrogencarbonate(out) + Na(+)(out) = 3 hydrogencarbonate(in) + Na(+)(in). Its function is as follows. Mediates sodium- and bicarbonate-dependent electrogenic sodium bicarbonate cotransport, with a Na(+):HCO3(-) stoichiometry varying from 1:2 to 1:3. This chain is Electrogenic sodium bicarbonate cotransporter 4 (Slc4a5), found in Mus musculus (Mouse).